The following is a 444-amino-acid chain: tRNA-2-methylthio-N(6)-dimethylallyladenosine synthase (444 aa).

Residues 6-124 form the MTTase N-terminal domain; the sequence is KTFKIITYGC…LPQLIEEIKA (119 aa). [4Fe-4S] cluster contacts are provided by Cys-15, Cys-51, Cys-85, Cys-161, Cys-165, and Cys-168. In terms of domain architecture, Radical SAM core spans 147–377; sequence RARGAQAFVT…MELQNSISLA (231 aa). Positions 380 to 443 constitute a TRAM domain; it reads EALVGQEVEV…TWLLKGEMVD (64 aa).

This sequence belongs to the methylthiotransferase family. MiaB subfamily. As to quaternary structure, monomer. It depends on [4Fe-4S] cluster as a cofactor.

It is found in the cytoplasm. It catalyses the reaction N(6)-dimethylallyladenosine(37) in tRNA + (sulfur carrier)-SH + AH2 + 2 S-adenosyl-L-methionine = 2-methylsulfanyl-N(6)-dimethylallyladenosine(37) in tRNA + (sulfur carrier)-H + 5'-deoxyadenosine + L-methionine + A + S-adenosyl-L-homocysteine + 2 H(+). Catalyzes the methylthiolation of N6-(dimethylallyl)adenosine (i(6)A), leading to the formation of 2-methylthio-N6-(dimethylallyl)adenosine (ms(2)i(6)A) at position 37 in tRNAs that read codons beginning with uridine. The protein is tRNA-2-methylthio-N(6)-dimethylallyladenosine synthase of Moorella thermoacetica (strain ATCC 39073 / JCM 9320).